The sequence spans 154 residues: Deoxyuridine 5'-triphosphate nucleotidohydrolase (154 aa).

Residues 72 to 74 (RSG), Asn85, 89 to 91 (LID), and Met99 each bind substrate.

It belongs to the dUTPase family. Mg(2+) is required as a cofactor.

It catalyses the reaction dUTP + H2O = dUMP + diphosphate + H(+). The protein operates within pyrimidine metabolism; dUMP biosynthesis; dUMP from dCTP (dUTP route): step 2/2. This enzyme is involved in nucleotide metabolism: it produces dUMP, the immediate precursor of thymidine nucleotides and it decreases the intracellular concentration of dUTP so that uracil cannot be incorporated into DNA. The chain is Deoxyuridine 5'-triphosphate nucleotidohydrolase from Psychrobacter cryohalolentis (strain ATCC BAA-1226 / DSM 17306 / VKM B-2378 / K5).